We begin with the raw amino-acid sequence, 379 residues long: RIB43A-like with coiled-coils protein 1 (379 aa).

Coiled coils occupy residues 43–111 (EALN…RCEL) and 285–337 (IRKV…EFRR).

The protein belongs to the RIB43A family. In terms of assembly, microtubule inner protein component of sperm flagellar doublet microtubules.

It localises to the cytoplasm. Its subcellular location is the cytoskeleton. It is found in the flagellum axoneme. The chain is RIB43A-like with coiled-coils protein 1 (RIBC1) from Bos taurus (Bovine).